A 78-amino-acid chain; its full sequence is MYLNSNKKKLIIKNYGLSEYDTGNCIVQIALLTFKIKNITNHLKYNKKDFNTERSLQILVSKRKKLLKYIEKKNNTQL.

This sequence belongs to the universal ribosomal protein uS15 family. In terms of assembly, part of the 30S ribosomal subunit. Forms a bridge to the 50S subunit in the 70S ribosome, contacting the 23S rRNA.

Functionally, one of the primary rRNA binding proteins, it binds directly to 16S rRNA where it helps nucleate assembly of the platform of the 30S subunit by binding and bridging several RNA helices of the 16S rRNA. Forms an intersubunit bridge (bridge B4) with the 23S rRNA of the 50S subunit in the ribosome. This is Small ribosomal subunit protein uS15 from Karelsulcia muelleri (strain GWSS) (Sulcia muelleri).